A 149-amino-acid polypeptide reads, in one-letter code: Nucleoside diphosphate kinase (149 aa).

Lysine 9, phenylalanine 57, arginine 85, threonine 91, arginine 102, and asparagine 112 together coordinate ATP. The active-site Pros-phosphohistidine intermediate is the histidine 115.

This sequence belongs to the NDK family. Homotetramer. Mg(2+) serves as cofactor.

It localises to the cytoplasm. It carries out the reaction a 2'-deoxyribonucleoside 5'-diphosphate + ATP = a 2'-deoxyribonucleoside 5'-triphosphate + ADP. It catalyses the reaction a ribonucleoside 5'-diphosphate + ATP = a ribonucleoside 5'-triphosphate + ADP. Its function is as follows. Major role in the synthesis of nucleoside triphosphates other than ATP. The ATP gamma phosphate is transferred to the NDP beta phosphate via a ping-pong mechanism, using a phosphorylated active-site intermediate. This Desulfitobacterium hafniense (strain Y51) protein is Nucleoside diphosphate kinase.